Here is a 250-residue protein sequence, read N- to C-terminus: Ribosomal RNA small subunit methyltransferase J (250 aa).

S-adenosyl-L-methionine-binding positions include 101 to 102 (RD), 117 to 118 (ER), 153 to 154 (SS), and aspartate 171.

The protein belongs to the methyltransferase superfamily. RsmJ family.

It localises to the cytoplasm. The enzyme catalyses guanosine(1516) in 16S rRNA + S-adenosyl-L-methionine = N(2)-methylguanosine(1516) in 16S rRNA + S-adenosyl-L-homocysteine + H(+). Specifically methylates the guanosine in position 1516 of 16S rRNA. This Escherichia coli O81 (strain ED1a) protein is Ribosomal RNA small subunit methyltransferase J.